The chain runs to 429 residues: MNHDQSHALFSRAQQLLPGGVNSPVRAFKSVGGEPFFVERADGAYLYDVDGNRYIDYVGSWGPMIVGHNHTAVRQAVKKAIDNGLSFGAPCAAEVTMAETITRLVPSCEMVRMVNSGTEATLSAIRLARGATGRNRIVKFEGCYHGHGDSFLVKAGSGMLTLGVPTSPGVPAGLSELTLTLPYNDFEAATALFEQQGDDIAGLIIEPVVGNANCIPPRDGYLQHLRELCTKHGTLLIFDEVMTGFRVALGGAQAHYGITPDLTTFGKIIGGGMPVGAYGGRRELMQQIAPAGPIYQAGTLSGNPVAMAAGLAMLELIQQPGFHADLAERTARLCAGLEAAAADAGVVVTTTCVGAMFGLFFTSEKVETYAQATACDIPAFNRFFHAMLDQGVFLAPSAYEAGFLSSAHDDAVIEATLAAARVAFKAAKG.

N6-(pyridoxal phosphate)lysine is present on lysine 267.

Belongs to the class-III pyridoxal-phosphate-dependent aminotransferase family. HemL subfamily. Homodimer. Pyridoxal 5'-phosphate serves as cofactor.

Its subcellular location is the cytoplasm. The enzyme catalyses (S)-4-amino-5-oxopentanoate = 5-aminolevulinate. Its pathway is porphyrin-containing compound metabolism; protoporphyrin-IX biosynthesis; 5-aminolevulinate from L-glutamyl-tRNA(Glu): step 2/2. This chain is Glutamate-1-semialdehyde 2,1-aminomutase, found in Stenotrophomonas maltophilia (strain R551-3).